Here is a 239-residue protein sequence, read N- to C-terminus: Claudin-14 (239 aa).

The Cytoplasmic portion of the chain corresponds to 1 to 7 (MASTAVQ). A helical membrane pass occupies residues 8–28 (LLGFLLSFLGMVGTLITTILP). Residues 29–81 (HWRRTAHVGTNILTAVSYLKGLWMECVWHSTGIYQCQIYRSLLALPRDLQAAR) lie on the Extracellular side of the membrane. A helical membrane pass occupies residues 82 to 102 (ALMVISCLLSGMACACAVVGM). Residues 103–115 (KCTRCAKGTPAKT) are Cytoplasmic-facing. Residues 116 to 136 (TFAVLGGALFLLAGLLCMVAV) traverse the membrane as a helical segment. Over 137–162 (SWTTNDVVQNFYNPLLPSGMKFEIGQ) the chain is Extracellular. The helical transmembrane segment at 163–183 (ALYLGFISSSLSLIGGTLLCL) threads the bilayer. Residues 184–239 (SCQDEAPYRPYPPQSRAGATTTATAPAYRPPAAYKDNRAPSVTSAAHSGYRLNDYV) are Cytoplasmic-facing.

The protein belongs to the claudin family. In terms of tissue distribution, expressed in all sensory epithelia of the inner ear vestibular organs, as well as in liver and kidney.

It is found in the cell junction. Its subcellular location is the tight junction. The protein resides in the cell membrane. In terms of biological role, plays a major role in tight junction-specific obliteration of the intercellular space, through calcium-independent cell-adhesion activity. This chain is Claudin-14 (Cldn14), found in Mus musculus (Mouse).